Here is a 349-residue protein sequence, read N- to C-terminus: Increased DNA methylation 2 (349 aa).

Residues 210–230 form a disordered region; that stretch reads EDNAGTCTSGEESDVAAKPEV. In terms of domain architecture, sHSP spans 233-349; that stretch reads EAHGGLMVGL…VMKNLQKQTV (117 aa).

The protein belongs to the small heat shock protein (HSP20) family. As to quaternary structure, homodimer or oligomer. May form an 16-mer complex. Interacts with MBD7 (via C-terminus). Interacts with IDM1 (via N-terminus). Interacts with IMD3. Part of a complex made of MBD7, IDM1, IDM2, IDM3 and ROS1. In terms of tissue distribution, expressed in cotyledons and hypocotyls in young seedlings.

It localises to the nucleus. Its subcellular location is the nucleoplasm. Its function is as follows. Prevents DNA hypermethylation and transcriptional silencing of transgenes and of some endogenous genes. May act as a molecular chaperone of IDM1, regulating its H3K18 acetylation activity. In Arabidopsis thaliana (Mouse-ear cress), this protein is Increased DNA methylation 2.